Consider the following 800-residue polypeptide: Protein PET111, mitochondrial (800 aa).

It to yeast YHR160C.

The protein resides in the mitochondrion matrix. In terms of biological role, required for translation of the mitochondrial gene for cytochrome c oxidase subunit II (COX2). The protein is Protein PET111, mitochondrial (PET111) of Saccharomyces cerevisiae (strain ATCC 204508 / S288c) (Baker's yeast).